A 319-amino-acid polypeptide reads, in one-letter code: Acetyl-coenzyme A carboxylase carboxyl transferase subunit alpha (319 aa).

The region spanning 32–293 (NVDTEVRALE…KAVLLNELEA (262 aa)) is the CoA carboxyltransferase C-terminal domain.

The protein belongs to the AccA family. In terms of assembly, acetyl-CoA carboxylase is a heterohexamer composed of biotin carboxyl carrier protein (AccB), biotin carboxylase (AccC) and two subunits each of ACCase subunit alpha (AccA) and ACCase subunit beta (AccD).

Its subcellular location is the cytoplasm. The enzyme catalyses N(6)-carboxybiotinyl-L-lysyl-[protein] + acetyl-CoA = N(6)-biotinyl-L-lysyl-[protein] + malonyl-CoA. It participates in lipid metabolism; malonyl-CoA biosynthesis; malonyl-CoA from acetyl-CoA: step 1/1. Component of the acetyl coenzyme A carboxylase (ACC) complex. First, biotin carboxylase catalyzes the carboxylation of biotin on its carrier protein (BCCP) and then the CO(2) group is transferred by the carboxyltransferase to acetyl-CoA to form malonyl-CoA. This is Acetyl-coenzyme A carboxylase carboxyl transferase subunit alpha from Xylella fastidiosa (strain M12).